A 1003-amino-acid chain; its full sequence is Leucine-rich repeat receptor-like serine/threonine-protein kinase BAM1 (1003 aa).

The first 19 residues, 1-19 (MKLFLLLLFLLHISHTFTA), serve as a signal peptide directing secretion. The Extracellular portion of the chain corresponds to 20 to 640 (SRPISEFRAL…HSKGPLSASM (621 aa)). 22 LRR repeats span residues 68–92 (RRHV…VSHL), 93–116 (RLLQ…ISSL), 117–140 (SGLR…ISSG), 142–165 (VNLR…VTNL), 166–191 (TQLR…SWPV), 193–213 (EYLA…IGNL), 215–238 (TLRE…IGNL), 239–262 (SELV…IGKL), 263–285 (QKLD…ELGT), 286–310 (LSSL…FAEL), 312–334 (NLTL…IGDL), 335–358 (PELE…LGEN), 359–382 (GKLN…MCSG), 385–406 (LETL…LGKC), 407–430 (ESLT…LFGL), 432–454 (KLTQ…GGVS), 455–480 (VNLG…NFTG), 482–502 (QKLL…VGKL), 503–526 (QQLS…ISRC), 527–550 (KLLT…ITAM), 551–574 (KILN…ISSM), and 575–598 (QSLT…GQFS). Asparagine 80, asparagine 97, asparagine 123, asparagine 130, asparagine 153, and asparagine 164 each carry an N-linked (GlcNAc...) asparagine glycan. N-linked (GlcNAc...) asparagine glycans are attached at residues asparagine 212 and asparagine 237. N-linked (GlcNAc...) asparagine glycans are attached at residues asparagine 312 and asparagine 346. N-linked (GlcNAc...) asparagine glycosylation is present at asparagine 420. N-linked (GlcNAc...) asparagine glycosylation is present at asparagine 477. Residues asparagine 557, asparagine 586, and asparagine 601 are each glycosylated (N-linked (GlcNAc...) asparagine). The helical transmembrane segment at 641-661 (KLLLVLGLLVCSIAFAVVAII) threads the bilayer. The Cytoplasmic segment spans residues 662-1003 (KARSLKKASE…VQSPPDLLNL (342 aa)). Threonine 686 is subject to Phosphothreonine. Residues 694-971 (LKEDNIIGKG…VQILTEIPKL (278 aa)) enclose the Protein kinase domain. Residues 700-708 (IGKGGAGIV) and lysine 722 contribute to the ATP site. Tyrosine 769 and tyrosine 807 each carry phosphotyrosine. Aspartate 820 serves as the catalytic Proton acceptor. Phosphoserine is present on serine 855. 2 positions are modified to phosphotyrosine: tyrosine 863 and tyrosine 870. Threonine 871 bears the Phosphothreonine mark. Residues 969–1003 (PKLPPSKDQPMTESAPESELSPKSGVQSPPDLLNL) are disordered. Serine 996 is subject to Phosphoserine.

Belongs to the protein kinase superfamily. Ser/Thr protein kinase family. Self-interacts and interacts with BAM2 and CLV1. Binds to the CLV3, CLE5, CLE11, CLE18, CLE19, CLE22, CLE25, CLE26, CLE40, CLE41 and CLE42 mature peptides, probably via its extracellular leucine-rich repeat region. In terms of tissue distribution, expressed in seedlings, roots, leaves, inflorescences, flowers and siliques.

It is found in the cell membrane. It catalyses the reaction L-seryl-[protein] + ATP = O-phospho-L-seryl-[protein] + ADP + H(+). It carries out the reaction L-threonyl-[protein] + ATP = O-phospho-L-threonyl-[protein] + ADP + H(+). In terms of biological role, necessary for male gametophyte development, as well as ovule specification and function. Involved in cell-cell communication process required during early anther development, and regulating cell division and differentiation to organize cell layers. Required for the development of high-ordered vascular strands within the leaf and a correlated control of leaf shape, size and symmetry. May regulate the CLV1-dependent CLV3-mediated signaling in meristems maintenance. In Arabidopsis thaliana (Mouse-ear cress), this protein is Leucine-rich repeat receptor-like serine/threonine-protein kinase BAM1 (BAM1).